The primary structure comprises 403 residues: S-adenosylmethionine synthase (403 aa).

H16 contacts ATP. Residue D18 coordinates Mg(2+). E44 provides a ligand contact to K(+). L-methionine is bound by residues E57 and Q100. The segment at 100–110 (QSSDIAQGVDR) is flexible loop. ATP is bound by residues 165-167 (DAK), D242, 248-249 (RK), A265, and K269. D242 is an L-methionine binding site. K273 lines the L-methionine pocket.

This sequence belongs to the AdoMet synthase family. Homotetramer; dimer of dimers. Requires Mg(2+) as cofactor. K(+) serves as cofactor.

Its subcellular location is the cytoplasm. The catalysed reaction is L-methionine + ATP + H2O = S-adenosyl-L-methionine + phosphate + diphosphate. It functions in the pathway amino-acid biosynthesis; S-adenosyl-L-methionine biosynthesis; S-adenosyl-L-methionine from L-methionine: step 1/1. Catalyzes the formation of S-adenosylmethionine (AdoMet) from methionine and ATP. The overall synthetic reaction is composed of two sequential steps, AdoMet formation and the subsequent tripolyphosphate hydrolysis which occurs prior to release of AdoMet from the enzyme. This Nitrosococcus oceani (strain ATCC 19707 / BCRC 17464 / JCM 30415 / NCIMB 11848 / C-107) protein is S-adenosylmethionine synthase.